The sequence spans 499 residues: MSLADELLADLEEAAEEEEGGSYGEEEEEPAIEDVQEETQLDLSGDSVKSIAKLWDSKMFAEIMMKIEEYISKQANVSEVMGPVEAAPEYRVIVDANNLTVEIENELNIIHKFIRDKYSKRFPELESLVPNALDYIRTVKELGNSLDKCKNNENLQQILTNATIMVVSVTASTTQGQQLSDEELERLEEACDMALELNASKHRIYEYVESRMSFIAPNLSIIIGASTAAKIMGVAGGLTNLSKMPACNIMLLGAQRKTLSGFSSTSVLPHTGYIYHSDIVQSLPPDLRRKAARLVAAKCTLAARVDSFHESTEGKVGYELKDEIERKFDKWQEPPPVKQVKPLPAPLDGQRKKRGGRRYRKMKERLGLTEIRKQANRMSFGEIEEDAYQEDLGFSLGHLGKSGSGRVRQTQVNEATKARISKTLQRTLQKQSVVYGGKSTIRDRSSGTASSVAFTPLQGLEIVNPQAAEKKVAEANQKYFSSMAEFLKVKGEKSGTMST.

The interval 1 to 43 (MSLADELLADLEEAAEEEEGGSYGEEEEEPAIEDVQEETQLDL) is disordered. A compositionally biased stretch (acidic residues) spans 7-40 (LLADLEEAAEEEEGGSYGEEEEEPAIEDVQEETQ). Coiled-coil stretches lie at residues 85-120 (EAAP…KYSK) and 181-215 (DEEL…MSFI). Residues 215-333 (IAPNLSIIIG…IERKFDKWQE (119 aa)) enclose the Nop domain. The tract at residues 334 to 357 (PPPVKQVKPLPAPLDGQRKKRGGR) is disordered. The short motif at 351 to 364 (RKKRGGRRYRKMKE) is the Nuclear localization signal (NLS) element. Residues serine 379, serine 395, and serine 432 each carry the phosphoserine modification. Lysine 438 carries the post-translational modification N6-acetyllysine. At serine 439 the chain carries Phosphoserine. Threonine 440 carries the post-translational modification Phosphothreonine. At serine 450 the chain carries Phosphoserine. Threonine 455 carries the post-translational modification Phosphothreonine. Glycyl lysine isopeptide (Lys-Gly) (interchain with G-Cter in SUMO2) cross-links involve residues lysine 471 and lysine 478.

This sequence belongs to the PRP31 family. In terms of assembly, identified in the spliceosome B complex. Component of the U4/U6-U5 tri-snRNP complex composed of the U4, U6 and U5 snRNAs and at least PRPF3, PRPF4, PRPF6, PRPF8, PRPF31, SNRNP200, TXNL4A, SNRNP40, DDX23, CD2BP2, PPIH, SNU13, EFTUD2, SART1 and USP39. Interacts with a complex formed by SNU13 and U4 snRNA, but not with SNU13 or U4 snRNA alone. The complex formed by SNU13 and PRPF31 also binds U4atac snRNA, a characteristic component of specific, less abundant spliceosomal complexes. Interacts with PRPF6/U5 snRNP-associated 102 kDa protein. Component of some MLL1/MLL complex, at least composed of the core components KMT2A/MLL1, ASH2L, HCFC1/HCF1, WDR5 and RBBP5, as well as the facultative components BACC1, CHD8, E2F6, HSP70, INO80C, KANSL1, LAS1L, MAX, MCRS1, MGA, KAT8/MOF, PELP1, PHF20, PRP31, RING2, RUVB1/TIP49A, RUVB2/TIP49B, SENP3, TAF1, TAF4, TAF6, TAF7, TAF9 and TEX10. Interacts (via its NLS) with CTNNBL1. Interacts with USH1G. Phosphorylated by PRP4K during spliceosome assembly.

The protein localises to the nucleus. It is found in the nucleus speckle. Its subcellular location is the cajal body. In terms of biological role, involved in pre-mRNA splicing as component of the spliceosome. Required for the assembly of the U4/U5/U6 tri-snRNP complex, one of the building blocks of the spliceosome. This chain is U4/U6 small nuclear ribonucleoprotein Prp31 (Prpf31), found in Mus musculus (Mouse).